Reading from the N-terminus, the 161-residue chain is NADH-quinone oxidoreductase subunit I (161 aa).

4Fe-4S ferredoxin-type domains are found at residues 52–82 (LRRYPNGEERCIACKLCEAICPAMAITIESE) and 92–121 (SRYDIDLTKCIFCGFCEEACPVDAVVETRV). Residues Cys-62, Cys-65, Cys-68, Cys-72, Cys-101, Cys-104, Cys-107, and Cys-111 each contribute to the [4Fe-4S] cluster site.

It belongs to the complex I 23 kDa subunit family. NDH-1 is composed of 14 different subunits. Subunits NuoA, H, J, K, L, M, N constitute the membrane sector of the complex. The cofactor is [4Fe-4S] cluster.

The protein resides in the cell inner membrane. The enzyme catalyses a quinone + NADH + 5 H(+)(in) = a quinol + NAD(+) + 4 H(+)(out). Functionally, NDH-1 shuttles electrons from NADH, via FMN and iron-sulfur (Fe-S) centers, to quinones in the respiratory chain. The immediate electron acceptor for the enzyme in this species is believed to be ubiquinone. Couples the redox reaction to proton translocation (for every two electrons transferred, four hydrogen ions are translocated across the cytoplasmic membrane), and thus conserves the redox energy in a proton gradient. The chain is NADH-quinone oxidoreductase subunit I from Azoarcus sp. (strain BH72).